The following is a 285-amino-acid chain: Enterobactin synthase component B (285 aa).

Residues 2–213 (AIPKLQAYAL…EELLPAPIPA (212 aa)) form an isochorismatase region. Residues 209-284 (APIPASKAAL…AWWKLLSREV (76 aa)) enclose the Carrier domain. Mg(2+)-binding residues include Asp-227, Gly-242, and Asp-244. Ser-245 bears the O-(pantetheine 4'-phosphoryl)serine mark.

This sequence in the N-terminal section; belongs to the isochorismatase family. Proteins EntB, EntD, EntE, and EntF form a multienzyme complex called enterobactin synthase. Homodimer. Also forms a specific pairwise interaction with EntC; this interaction likely facilitates substrate channeling to connect the EntB and EntC active sites. Mg(2+) serves as cofactor. 4'-phosphopantetheine is transferred from CoA to a specific serine of apo-EntB by EntD. Holo-EntB so formed is then acylated with 2,3-dihydroxybenzoate in a reaction catalyzed by EntE.

It localises to the cytoplasm. It catalyses the reaction 3 2,3-dihydroxybenzoate + 3 L-serine + 6 ATP = enterobactin + 6 AMP + 6 diphosphate + 4 H(+). The enzyme catalyses isochorismate + H2O = (2S,3S)-2,3-dihydroxy-2,3-dihydrobenzoate + pyruvate. It functions in the pathway siderophore biosynthesis; enterobactin biosynthesis. In terms of biological role, involved in the biosynthesis of the siderophore enterobactin (enterochelin), which is a macrocyclic trimeric lactone of N-(2,3-dihydroxybenzoyl)-serine. The serine trilactone serves as a scaffolding for the three catechol functionalities that provide hexadentate coordination for the tightly ligated iron(3+) atoms. EntB is a bifunctional protein that serves as an isochorismate lyase and an aryl carrier protein (ArCP). Catalyzes the conversion of isochorismate to 2,3-dihydro-2,3-dihydroxybenzoate (2,3-diDHB), the precursor of 2,3-dihydroxybenzoate (DHB). In the enterobactin assembly, EntB functions as an aryl carrier protein phosphopantetheinylated near the C terminus by EntD to yield holo-EntB, which is then acylated by EntE with 2,3-dihydroxybenzoyl-AMP to form DHB-holo-EntB. Then this product will serve in the formation of the amide bond between 2,3-dihydroxybenzoate (DHB) and L-serine. The polypeptide is Enterobactin synthase component B (Escherichia coli O157:H7).